Reading from the N-terminus, the 502-residue chain is Solute carrier family 2, facilitated glucose transporter member 5 (502 aa).

N-acetylmethionine is present on Met-1. Residues 1-17 lie on the Cytoplasmic side of the membrane; it reads MEKEDQEKTGKLTLVLA. The helical transmembrane segment at 18–38 threads the bilayer; that stretch reads LATFLAAFGSSFQYGYNVAAV. Tyr-31 contributes to the D-fructose binding site. At 39–67 the chain is on the extracellular side; it reads NSPSEFMQQFYNDTYYDRNKENIESFTLT. An N-linked (GlcNAc...) asparagine glycan is attached at Asn-50. A helical transmembrane segment spans residues 68 to 90; that stretch reads LLWSLTVSMFPFGGFIGSLMVGF. Residues 91-97 are Cytoplasmic-facing; it reads LVNNLGR. A helical membrane pass occupies residues 98–118; it reads KGALLFNNIFSILPAILMGCS. Over 119–125 the chain is Extracellular; the sequence is KIAKSFE. The helical transmembrane segment at 126-148 threads the bilayer; that stretch reads IIIASRLLVGICAGISSNVVPMY. Residues 149–160 lie on the Cytoplasmic side of the membrane; sequence LGELAPKNLRGA. Residues 161–181 form a helical membrane-spanning segment; that stretch reads LGVVPQLFITVGILVAQLFGL. Gln-166 contacts D-fructose. Topologically, residues 182–191 are extracellular; sequence RSVLASEEGW. The chain crosses the membrane as a helical span at residues 192–212; sequence PILLGLTGVPAGLQLLLLPFF. The Cytoplasmic portion of the chain corresponds to 213 to 276; that stretch reads PESPRYLLIQ…LFRMQSLRWQ (64 aa). Residues 277–297 traverse the membrane as a helical segment; it reads LISTIVLMAGQQLSGVNAIYY. Residues Gln-287 and 295-297 each bind D-fructose; that span reads IYY. Residues 298-312 lie on the Extracellular side of the membrane; the sequence is YADQIYLSAGVKSND. The chain crosses the membrane as a helical span at residues 313–333; it reads VQYVTAGTGAVNVFMTMVTVF. Residues 334-341 are Cytoplasmic-facing; sequence VVELWGRR. A helical membrane pass occupies residues 342-362; sequence NLLLIGFSTCLTACIVLTVAL. The Extracellular segment spans residues 363–370; it reads ALQNTISW. A helical transmembrane segment spans residues 371 to 393; the sequence is MPYVSIVCVIVYVIGHAVGPSPI. Position 386 (His-386) interacts with D-fructose. Residues 394–411 lie on the Cytoplasmic side of the membrane; sequence PALFITEIFLQSSRPSAY. A helical membrane pass occupies residues 412 to 432; the sequence is MIGGSVHWLSNFIVGLIFPFI. 418 to 419 is a binding site for D-fructose; the sequence is HW. Residues 433 to 438 are Extracellular-facing; sequence QVGLGP. A helical membrane pass occupies residues 439–459; sequence YSFIIFAIICLLTTIYIFMVV. The Cytoplasmic segment spans residues 460-502; sequence PETKGRTFVEINQIFAKKNKVSDVYPEKEEKELNDLPPATREQ.

The protein belongs to the major facilitator superfamily. Sugar transporter (TC 2.A.1.1) family. Glucose transporter subfamily. As to expression, detected in jejunum. Detected in kidney, skeletal muscle, brain and adipose tissue (at protein level). Detected in small intestine and in kidney, and at much lower levels in brain. Detected in enterocytes in duodenum, jejunum, and ileum.

The protein localises to the apical cell membrane. It localises to the cell membrane. It is found in the sarcolemma. The catalysed reaction is D-fructose(out) = D-fructose(in). With respect to regulation, fructose uptake is inhibited by mercury ions. Fructose uptake is only slightly inhibited by cytochalasin B. Functions as a fructose transporter that has only low activity with other monosaccharides. Can mediate the uptake of deoxyglucose, but with low efficiency. Essential for fructose uptake in the small intestine. Plays a role in the regulation of salt uptake and blood pressure in response to dietary fructose. Required for the development of high blood pressure in response to high dietary fructose intake. In Rattus norvegicus (Rat), this protein is Solute carrier family 2, facilitated glucose transporter member 5.